The following is a 212-amino-acid chain: Uracil phosphoribosyltransferase (212 aa).

5-phospho-alpha-D-ribose 1-diphosphate contacts are provided by residues R78, R103, and 130–138 (DPMLATGGS). Uracil is bound by residues I193 and 198–200 (GDA). D199 serves as a coordination point for 5-phospho-alpha-D-ribose 1-diphosphate.

The protein belongs to the UPRTase family. It depends on Mg(2+) as a cofactor.

The enzyme catalyses UMP + diphosphate = 5-phospho-alpha-D-ribose 1-diphosphate + uracil. Its pathway is pyrimidine metabolism; UMP biosynthesis via salvage pathway; UMP from uracil: step 1/1. Its activity is regulated as follows. Allosterically activated by GTP. Functionally, catalyzes the conversion of uracil and 5-phospho-alpha-D-ribose 1-diphosphate (PRPP) to UMP and diphosphate. The sequence is that of Uracil phosphoribosyltransferase from Bordetella avium (strain 197N).